The chain runs to 93 residues: Antitoxin RelF (93 aa).

The protein belongs to the phD/YefM antitoxin family. As to quaternary structure, interacts with toxin RelG, which neutralizes the toxin. Also interacts with toxins RelE and RelK in vitro, in M.smegmatis coexpression with non-cognate toxins increases the toxicity of RelE but not of RelK.

Its function is as follows. Antitoxin component of a type II toxin-antitoxin (TA) system. Upon expression in M.smegmatis neutralizes the effect of toxin RelE2. Functionally, induces its own promoter, in combination with RelG represses its own promoter. Has been seen to bind DNA in complex with toxin RelG but not alone. This chain is Antitoxin RelF (relF), found in Mycobacterium tuberculosis (strain ATCC 25618 / H37Rv).